A 613-amino-acid chain; its full sequence is Kelch-like protein 36 (613 aa).

Residues 45–112 form the BTB domain; the sequence is CDVVLVVEEQ…LYSSELELDG (68 aa). Positions 147–249 constitute a BACK domain; the sequence is YLYLQELASI…PEDILLQRVK (103 aa). Kelch repeat units follow at residues 294 to 343, 344 to 395, 396 to 442, 444 to 491, 492 to 544, and 545 to 593; these read CLLF…VLGG, FIFI…SIED, MLVA…IYKD, VYIS…SLGD, SIYS…VWQG, and RIYI…VCAL.

In terms of assembly, interacts with CUL3.

Its pathway is protein modification; protein ubiquitination. In terms of biological role, probable substrate-specific adapter of an E3 ubiquitin-protein ligase complex which mediates the ubiquitination and subsequent proteasomal degradation of target proteins. The sequence is that of Kelch-like protein 36 (Klhl36) from Mus musculus (Mouse).